The primary structure comprises 296 residues: 33 kDa chaperonin (296 aa).

Intrachain disulfides connect Cys-236–Cys-238 and Cys-269–Cys-272.

The protein belongs to the HSP33 family. Under oxidizing conditions two disulfide bonds are formed involving the reactive cysteines. Under reducing conditions zinc is bound to the reactive cysteines and the protein is inactive.

The protein localises to the cytoplasm. Redox regulated molecular chaperone. Protects both thermally unfolding and oxidatively damaged proteins from irreversible aggregation. Plays an important role in the bacterial defense system toward oxidative stress. The sequence is that of 33 kDa chaperonin from Lactobacillus acidophilus (strain ATCC 700396 / NCK56 / N2 / NCFM).